The chain runs to 159 residues: C-type lectin 1 (159 aa).

A signal peptide spans 1–23 (MGRFIFISFGLLVVFFFLSGAKG). 4 disulfides stabilise this stretch: cysteine 26–cysteine 37, cysteine 54–cysteine 155, cysteine 61–cysteine 157, and cysteine 130–cysteine 147. Residues 33–156 (MYGLCYKIFD…CKVKNAFLCQ (124 aa)) enclose the C-type lectin domain. N-linked (GlcNAc...) asparagine glycosylation occurs at asparagine 118. Positions 119–121 (LTD) match the Sugar-binding motif. The Ca(2+) site is built by aspartate 121, aspartate 127, and asparagine 143.

The protein belongs to the true venom lectin family. Homodimer; disulfide-linked. As to expression, expressed by the venom gland.

The protein resides in the secreted. Lectin which recognizes specific carbohydrate structures and agglutinates a variety of animal cells by binding to cell-surface glycoproteins and glycolipids. May be a calcium-dependent lectin. The polypeptide is C-type lectin 1 (Bitis gabonica (Gaboon adder)).